We begin with the raw amino-acid sequence, 310 residues long: Protoheme IX farnesyltransferase (310 aa).

Transmembrane regions (helical) follow at residues 21 to 43 (LLKP…VAPV), 48 to 70 (MIAL…LNMW), 95 to 115 (GEAL…LGLA), 118 to 138 (LFAA…YSMW), 147 to 167 (IVIG…VATG), 174 to 194 (LFMF…LALF), 220 to 240 (VLVY…TGIG), 243 to 263 (LYLA…VRIW), and 289 to 309 (LFLH…GLGG).

This sequence belongs to the UbiA prenyltransferase family. Protoheme IX farnesyltransferase subfamily. In terms of assembly, interacts with CtaA.

Its subcellular location is the cell inner membrane. The catalysed reaction is heme b + (2E,6E)-farnesyl diphosphate + H2O = Fe(II)-heme o + diphosphate. Its pathway is porphyrin-containing compound metabolism; heme O biosynthesis; heme O from protoheme: step 1/1. In terms of biological role, converts heme B (protoheme IX) to heme O by substitution of the vinyl group on carbon 2 of heme B porphyrin ring with a hydroxyethyl farnesyl side group. The protein is Protoheme IX farnesyltransferase of Cereibacter sphaeroides (strain KD131 / KCTC 12085) (Rhodobacter sphaeroides).